Consider the following 77-residue polypeptide: MEDNKPVPPQTKPLDQDEILKTVMKEIEKTYGKGAIMKLGDKSNLTIEAVSTGSLLLDEAIGVGGYPKGRIIEIFGP.

Belongs to the RecA family.

The protein localises to the cytoplasm. Can catalyze the hydrolysis of ATP in the presence of single-stranded DNA, the ATP-dependent uptake of single-stranded DNA by duplex DNA, and the ATP-dependent hybridization of homologous single-stranded DNAs. It interacts with LexA causing its activation and leading to its autocatalytic cleavage. This chain is Protein RecA (recA), found in Spiroplasma melliferum.